The sequence spans 180 residues: Large ribosomal subunit protein uL5 (180 aa).

It belongs to the universal ribosomal protein uL5 family. In terms of assembly, part of the 50S ribosomal subunit; part of the 5S rRNA/L5/L18/L25 subcomplex. Contacts the 5S rRNA and the P site tRNA. Forms a bridge to the 30S subunit in the 70S ribosome.

Functionally, this is one of the proteins that bind and probably mediate the attachment of the 5S RNA into the large ribosomal subunit, where it forms part of the central protuberance. In the 70S ribosome it contacts protein S13 of the 30S subunit (bridge B1b), connecting the 2 subunits; this bridge is implicated in subunit movement. Contacts the P site tRNA; the 5S rRNA and some of its associated proteins might help stabilize positioning of ribosome-bound tRNAs. In Cupriavidus necator (strain ATCC 17699 / DSM 428 / KCTC 22496 / NCIMB 10442 / H16 / Stanier 337) (Ralstonia eutropha), this protein is Large ribosomal subunit protein uL5.